Consider the following 242-residue polypeptide: DNA repair protein RecO (242 aa).

This sequence belongs to the RecO family. In terms of assembly, monomer.

In terms of biological role, involved in DNA repair and RecF pathway recombination. This Shigella sonnei (strain Ss046) protein is DNA repair protein RecO.